Reading from the N-terminus, the 163-residue chain is SsrA-binding protein (163 aa).

This sequence belongs to the SmpB family.

It localises to the cytoplasm. Its function is as follows. Required for rescue of stalled ribosomes mediated by trans-translation. Binds to transfer-messenger RNA (tmRNA), required for stable association of tmRNA with ribosomes. tmRNA and SmpB together mimic tRNA shape, replacing the anticodon stem-loop with SmpB. tmRNA is encoded by the ssrA gene; the 2 termini fold to resemble tRNA(Ala) and it encodes a 'tag peptide', a short internal open reading frame. During trans-translation Ala-aminoacylated tmRNA acts like a tRNA, entering the A-site of stalled ribosomes, displacing the stalled mRNA. The ribosome then switches to translate the ORF on the tmRNA; the nascent peptide is terminated with the 'tag peptide' encoded by the tmRNA and targeted for degradation. The ribosome is freed to recommence translation, which seems to be the essential function of trans-translation. The sequence is that of SsrA-binding protein from Shewanella putrefaciens (strain CN-32 / ATCC BAA-453).